We begin with the raw amino-acid sequence, 502 residues long: MVLTTTSIRDSEESLHCTFASRYVQEPLPKFKMPKKSMPKEAAYQIVNDELMLDGNPRLNLASFVSTWMEPECDKLIMSSINKNYVDMDEYPVTTELQNRCVNMLAHLFHAPVGDDETAVGVGTVGSSEAIMLAGLAFKRKWQSKRKAEGKPFDKPNIVTGANVQVCWEKFARYFEVELKEVKLKEGYYVMDPAKAVEIVDENTICVAAILGSTLTGEFEDVKLLNELLTKKNKETGWETPIHVDAASGGFIAPFLWPDLEWDFRLPLVKSINVSGHKYGLVYAGVGWVIWRSKEDLPDELVFHINYLGSDQPTFTLNFSKGSYQIIAQYYQLIRLGFEGYKNVMKNCLSNAKVLTEGITKMGRFDIVSKDVGVPVVAFSLRDSSKYTVFEVSEHLRRFGWIVPAYTMPPDAEHIAVLRVVIREDFSHSLAERLVSDIEKILSELDTQPPRLPTKAVRVTAEEVRDDKGDGLHHFHMDTVETQKDIIKHWRKIAGKKTSGVC.

Lysine 278 is modified (N6-(pyridoxal phosphate)lysine). Residues 471–502 (GLHHFHMDTVETQKDIIKHWRKIAGKKTSGVC) are calmodulin-binding.

This sequence belongs to the group II decarboxylase family. The cofactor is pyridoxal 5'-phosphate.

It catalyses the reaction L-glutamate + H(+) = 4-aminobutanoate + CO2. Catalyzes the production of GABA. The calmodulin-binding is calcium-dependent and it is proposed that this may, directly or indirectly, form a calcium regulated control of GABA biosynthesis. This Solanum lycopersicum (Tomato) protein is Glutamate decarboxylase.